The chain runs to 612 residues: Lipoma-preferred partner (612 aa).

Disordered stretches follow at residues 1-118 (MSHP…SSLD) and 132-219 (ECSS…SSRP). The span at 26–40 (THSFGNPSISVSTQQ) shows a compositional bias: polar residues. Low complexity predominate over residues 41 to 53 (PPKKFAPVVAPKP). An N6-acetyllysine modification is found at lysine 108. 2 positions are modified to phosphoserine: serine 116 and serine 151. 2 stretches are compositionally biased toward polar residues: residues 143 to 158 (QSST…STPV) and 171 to 181 (PLTATKKSTLK). Residues 183–193 (QPAPQAGPIPV) show a composition bias toward pro residues. The span at 209–219 (SYTTASTSSRP) shows a compositional bias: polar residues. A phosphotyrosine mark is found at tyrosine 244 and tyrosine 301. The segment at 307 to 387 (YGGRNDSDPT…LGPSSVAPSF (81 aa)) is disordered. Residues 314–323 (DPTYGQQGHP) are compositionally biased toward polar residues. A Glycyl lysine isopeptide (Lys-Gly) (interchain with G-Cter in SUMO1) cross-link involves residue lysine 327. Threonine 333 bears the Phosphothreonine mark. Phosphoserine is present on serine 375. LIM zinc-binding domains are found at residues 414 to 473 (GRCA…INTL), 474 to 534 (EQCN…KFAP), and 535 to 603 (RCSV…RIRV).

The protein belongs to the zyxin/ajuba family. As to quaternary structure, interacts with VASP, with PDZ domains of SCRIB and with ACTN1/alpha-actinin. As to expression, expressed in a wide variety of tissues but no or very low expression in brain and peripheral leukocytes.

It is found in the nucleus. Its subcellular location is the cytoplasm. The protein resides in the cell junction. It localises to the cell membrane. Functionally, may play a structural role at sites of cell adhesion in maintaining cell shape and motility. In addition to these structural functions, it may also be implicated in signaling events and activation of gene transcription. May be involved in signal transduction from cell adhesion sites to the nucleus allowing successful integration of signals arising from soluble factors and cell-cell adhesion sites. Also suggested to serve as a scaffold protein upon which distinct protein complexes are assembled in the cytoplasm and in the nucleus. This chain is Lipoma-preferred partner (LPP), found in Homo sapiens (Human).